We begin with the raw amino-acid sequence, 476 residues long: Glycogen synthase (476 aa).

Lysine 15 contacts ADP-alpha-D-glucose.

It belongs to the glycosyltransferase 1 family. Bacterial/plant glycogen synthase subfamily.

The enzyme catalyses [(1-&gt;4)-alpha-D-glucosyl](n) + ADP-alpha-D-glucose = [(1-&gt;4)-alpha-D-glucosyl](n+1) + ADP + H(+). Its pathway is glycan biosynthesis; glycogen biosynthesis. Synthesizes alpha-1,4-glucan chains using ADP-glucose. The sequence is that of Glycogen synthase from Bacillus cereus (strain B4264).